We begin with the raw amino-acid sequence, 638 residues long: MIDTTRYPRLSRIHTPDDLRRFDEAELTVIAEELRSYLIESVGKSGGHFAAGLGVIELTVALHYLYQTPVDQLVWDVGHQTYPHKILTGRRDQIHTVKQKDGVAPFPKREESVYDTFGVGHSSTSISAALGMAIAAQRNGDDRKVVAVIGDGAMTAGMVYEALNHAGGMDPEPNLLVILNDNRMSISEAVGGLTKMLGRASGSRTLNAIREGGKKILGDKKNNPTARFVRRWEEHWKGMFVPSTLFEEMGFHYTGPIDGHDLPRLVGALKTLQTLKGPQLLHVITTKGKGYELAEGDQIGYHAVSPFDPSKGLVAKGGAKKPTYTDVFSDWVCDMAAAEPKLLVITPAMREGSGLVRFSKEYPQRYFDVAIAEQHAVTLAAGMATQGAKPVVAIYSTFLQRGYDQLVHDVAVQQLDVLFAIDRGGVVGPDGATHAGNLDLSFLRCVPHMVVMAPADEAECRQMLSTGMQYQGPAAVRYPRGTGPGAALDSSLATLPIGKAQLRHSGTRIALLGFGATVDAAEAVGRDLGLTVVNMRFVKPLDKAMLLELAKTHEGFVTIEDNVVAGGAGSGVSELLNAEAITLPMLHLGLPDSFQHHASREDLLAEAGIDQAGIRTAVLKRWPQLMTGKTPSLNAAAG.

Thiamine diphosphate is bound by residues histidine 79 and 120 to 122; that span reads GHS. Aspartate 151 is a Mg(2+) binding site. Thiamine diphosphate-binding positions include 152–153, asparagine 182, tyrosine 291, and glutamate 373; that span reads GA. Asparagine 182 provides a ligand contact to Mg(2+).

This sequence belongs to the transketolase family. DXPS subfamily. Homodimer. It depends on Mg(2+) as a cofactor. Thiamine diphosphate is required as a cofactor.

The enzyme catalyses D-glyceraldehyde 3-phosphate + pyruvate + H(+) = 1-deoxy-D-xylulose 5-phosphate + CO2. Its pathway is metabolic intermediate biosynthesis; 1-deoxy-D-xylulose 5-phosphate biosynthesis; 1-deoxy-D-xylulose 5-phosphate from D-glyceraldehyde 3-phosphate and pyruvate: step 1/1. Catalyzes the acyloin condensation reaction between C atoms 2 and 3 of pyruvate and glyceraldehyde 3-phosphate to yield 1-deoxy-D-xylulose-5-phosphate (DXP). The chain is 1-deoxy-D-xylulose-5-phosphate synthase from Xanthomonas oryzae pv. oryzae (strain MAFF 311018).